Consider the following 159-residue polypeptide: MQLFFLCAALVIVLDQFTKQLAITHLMPNEESLVLIAEWLKLTYTENTGIAFGLSLGSPMILIVSTTLILAALFLYVVFSKNRNPGFLITFGLILGGGIGNGIDRILSGRVVDFIHVDIYQGYLFGSWVSLWPVFNIADSAITIGACVLVIWYNRFFTR.

2 consecutive transmembrane segments (helical) span residues 59–79 (PMILIVSTTLILAALFLYVVF) and 87–107 (FLITFGLILGGGIGNGIDRIL). Active-site residues include aspartate 113 and aspartate 139. Residues 131–151 (LWPVFNIADSAITIGACVLVI) traverse the membrane as a helical segment.

It belongs to the peptidase A8 family.

It localises to the cell inner membrane. It catalyses the reaction Release of signal peptides from bacterial membrane prolipoproteins. Hydrolyzes -Xaa-Yaa-Zaa-|-(S,diacylglyceryl)Cys-, in which Xaa is hydrophobic (preferably Leu), and Yaa (Ala or Ser) and Zaa (Gly or Ala) have small, neutral side chains.. The protein operates within protein modification; lipoprotein biosynthesis (signal peptide cleavage). In terms of biological role, this protein specifically catalyzes the removal of signal peptides from prolipoproteins. This chain is Lipoprotein signal peptidase, found in Chlorobium phaeobacteroides (strain BS1).